The following is a 436-amino-acid chain: Acrosin (436 aa).

Residues Met1–Ala19 form the signal peptide. Asn22 carries an N-linked (GlcNAc...) asparagine glycan. Cystine bridges form between Cys25/Cys155, Cys29/Cys163, Cys74/Cys90, Cys178/Cys247, Cys210/Cys226, and Cys237/Cys267. The Peptidase S1 domain occupies Ile43–Gly291. Active-site charge relay system residues include His89 and Asp143. N-linked (GlcNAc...) asparagine glycosylation is present at Asn211. The Charge relay system role is filled by Ser241. A propeptide spans Pro346–Ser436 (pro-rich).

It belongs to the peptidase S1 family. As to quaternary structure, heavy chain (catalytic) and a light chain linked by two disulfide bonds. Forms a heterodimer with SERPINA5.

The catalysed reaction is Preferential cleavage: Arg-|-Xaa, Lys-|-Xaa.. Inhibited by SERPINA5. Its function is as follows. Acrosin is the major protease of mammalian spermatozoa. It is a serine protease of trypsin-like cleavage specificity, it is synthesized in a zymogen form, proacrosin and stored in the acrosome. This Mus musculus (Mouse) protein is Acrosin (Acr).